A 139-amino-acid polypeptide reads, in one-letter code: Putative pre-16S rRNA nuclease (139 aa).

It belongs to the YqgF nuclease family.

Its subcellular location is the cytoplasm. Could be a nuclease involved in processing of the 5'-end of pre-16S rRNA. The polypeptide is Putative pre-16S rRNA nuclease (Photorhabdus laumondii subsp. laumondii (strain DSM 15139 / CIP 105565 / TT01) (Photorhabdus luminescens subsp. laumondii)).